Reading from the N-terminus, the 245-residue chain is 1-(5-phosphoribosyl)-5-[(5-phosphoribosylamino)methylideneamino] imidazole-4-carboxamide isomerase (245 aa).

D7 (proton acceptor) is an active-site residue. The active-site Proton donor is the D129.

The protein belongs to the HisA/HisF family.

The protein resides in the cytoplasm. The catalysed reaction is 1-(5-phospho-beta-D-ribosyl)-5-[(5-phospho-beta-D-ribosylamino)methylideneamino]imidazole-4-carboxamide = 5-[(5-phospho-1-deoxy-D-ribulos-1-ylimino)methylamino]-1-(5-phospho-beta-D-ribosyl)imidazole-4-carboxamide. It functions in the pathway amino-acid biosynthesis; L-histidine biosynthesis; L-histidine from 5-phospho-alpha-D-ribose 1-diphosphate: step 4/9. The polypeptide is 1-(5-phosphoribosyl)-5-[(5-phosphoribosylamino)methylideneamino] imidazole-4-carboxamide isomerase (Shewanella sp. (strain ANA-3)).